The primary structure comprises 297 residues: Golgi-associated RAB2 interactor protein 1A (297 aa).

Residues 226-257 (SNRHQTSRDRHTDTATETDNSGNCKSTPLVAS) form a disordered region. Polar residues predominate over residues 240–257 (ATETDNSGNCKSTPLVAS).

Belongs to the GARIN family. As to quaternary structure, interacts (via N-terminus) with RAB2B (in GTP-bound form). As to expression, expressed in testis (at protein level).

The protein resides in the golgi apparatus. Functionally, RAB2B effector protein required for accurate acrosome formation and normal male fertility. This is Golgi-associated RAB2 interactor protein 1A from Mus musculus (Mouse).